We begin with the raw amino-acid sequence, 392 residues long: uncharacterized protein (392 aa).

The first 23 residues, 1 to 23 (MWTALVLVWISSVLLPRSHMMSA), serve as a signal peptide directing secretion. Residues 24–342 (EPRNIVTNKW…DALTPSLVNK (319 aa)) are Extracellular-facing. Residue asparagine 77 is glycosylated (N-linked (GlcNAc...) asparagine). Disordered stretches follow at residues 83 to 154 (AEVT…PRTA) and 167 to 320 (AAGT…TDSC). Residues 86-97 (TTHGTNTSTPTT) show a composition bias toward low complexity. Polar residues-rich tracts occupy residues 107–127 (SRTL…TRPT) and 170–249 (TVNT…SAST). Asparagine 172 carries an N-linked (GlcNAc...) asparagine glycan. Composition is skewed to low complexity over residues 265-277 (SPTT…LPTQ) and 284-309 (TLLT…SRSS). The chain crosses the membrane as a helical span at residues 343 to 363 (MLLLVVLLVGVTLFIAVLVMF). Over 364-392 (ALQAYESYKKKDYTQVDYLINGMYADSEM) the chain is Cytoplasmic.

The protein localises to the cell membrane. It localises to the golgi apparatus. The protein resides in the trans-Golgi network membrane. This is an uncharacterized protein from Mus musculus (Mouse).